Reading from the N-terminus, the 131-residue chain is Metalloproteinase inhibitor (131 aa).

An N-terminal signal peptide occupies residues 1–29 (MVRKRALGLAGSALTLVLGAVGFTAPAQA). Disulfide bonds link cysteine 33-cysteine 39 and cysteine 93-cysteine 98.

In terms of biological role, inhibits microbial metallo-proteinases, such as thermolysin, but not serine, thiol, or carboxyl proteinases. The protein is Metalloproteinase inhibitor (smpI) of Streptomyces nigrescens.